A 319-amino-acid chain; its full sequence is Acetyl-coenzyme A carboxylase carboxyl transferase subunit alpha (319 aa).

In terms of domain architecture, CoA carboxyltransferase C-terminal spans 32–293 (NVDAEVRALR…KAVLLNELDA (262 aa)).

This sequence belongs to the AccA family. As to quaternary structure, acetyl-CoA carboxylase is a heterohexamer composed of biotin carboxyl carrier protein (AccB), biotin carboxylase (AccC) and two subunits each of ACCase subunit alpha (AccA) and ACCase subunit beta (AccD).

Its subcellular location is the cytoplasm. It catalyses the reaction N(6)-carboxybiotinyl-L-lysyl-[protein] + acetyl-CoA = N(6)-biotinyl-L-lysyl-[protein] + malonyl-CoA. It participates in lipid metabolism; malonyl-CoA biosynthesis; malonyl-CoA from acetyl-CoA: step 1/1. Functionally, component of the acetyl coenzyme A carboxylase (ACC) complex. First, biotin carboxylase catalyzes the carboxylation of biotin on its carrier protein (BCCP) and then the CO(2) group is transferred by the carboxyltransferase to acetyl-CoA to form malonyl-CoA. The chain is Acetyl-coenzyme A carboxylase carboxyl transferase subunit alpha from Xanthomonas campestris pv. campestris (strain B100).